The chain runs to 305 residues: tRNA dimethylallyltransferase (305 aa).

8-15 (GPTGTGKS) is an ATP binding site. 10–15 (TGTGKS) is a substrate binding site.

It belongs to the IPP transferase family. As to quaternary structure, monomer. The cofactor is Mg(2+).

The catalysed reaction is adenosine(37) in tRNA + dimethylallyl diphosphate = N(6)-dimethylallyladenosine(37) in tRNA + diphosphate. Its function is as follows. Catalyzes the transfer of a dimethylallyl group onto the adenine at position 37 in tRNAs that read codons beginning with uridine, leading to the formation of N6-(dimethylallyl)adenosine (i(6)A). The chain is tRNA dimethylallyltransferase from Mycobacterium sp. (strain JLS).